A 977-amino-acid polypeptide reads, in one-letter code: GAS2-like protein pickled eggs (977 aa).

The 140-residue stretch at 20–159 (EAMREDLAEW…CLLEVARRGA (140 aa)) folds into the Calponin-homology (CH) domain. Positions 218 to 245 (VETDLYDDSDDSETEDDGDQNPVLMYGP) are disordered. Over residues 221–236 (DLYDDSDDSETEDDGD) the composition is skewed to acidic residues. Residues 252-324 (NDLKSLDEMV…HYLDKHDPCR (73 aa)) form the GAR domain. Disordered regions lie at residues 397 to 543 (PTLQ…SEIS), 557 to 624 (AQKR…VCDG), 666 to 685 (VANTMGNPTPNLSKIPRSPL), 693 to 803 (IDNS…KGRS), and 910 to 977 (NLER…TELY). 2 stretches are compositionally biased toward polar residues: residues 399–428 (LQNGHSLSPNSGKYRSRSPTPQRKFLNQQA) and 436–454 (ATGSSQTVTTDTSSGQLLG). A compositionally biased stretch (gly residues) spans 502–527 (GGSGVGSAAGGVSSGSAGSGVAGEQG). Polar residues predominate over residues 577–589 (RLDQTSSDSQISP). A compositionally biased stretch (acidic residues) spans 601 to 620 (ILEEEDLNGQDREEDQEDYS). Polar residues-rich tracts occupy residues 666-677 (VANTMGNPTPNL) and 731-741 (TRNSTGATTTP). The segment covering 928 to 953 (SSAASSCESNNSNAGAGSGAAAGSAS) has biased composition (low complexity).

This sequence belongs to the GAS2 family. In terms of tissue distribution, expressed in the ovary and the ring canals of the germline cells. In larvae, expressed in the notal region of the wing disk.

Its subcellular location is the cytoplasm. It localises to the cytoskeleton. The protein resides in the cell cortex. Its function is as follows. Essential for development and viability. Required for ovary development and oogenesis, and is essential for the development of the indirect flight muscles. May act as a negative regulator of the Notch signaling pathway in certain tissues, such as the muscle precursors and ovaries. May function as a linker protein between the actin and microtubule cytoskeletons. The chain is GAS2-like protein pickled eggs from Drosophila melanogaster (Fruit fly).